The chain runs to 371 residues: MDFQLQAIDKHARAGLLNLAHSQVATPVFMPVGTQGCIKSLDAMDMQEILGAKLILANTYHMYLRPGEKVVEQLGGLHRFAQFHGSFLTDSGGFQAFSLSGNVKLQEDGIVFKSHIDGSKHFFTPAKVLDIQYSLNSDIMMVLDDLVGLPAPLKRLEESIKRSAKWANLSLEYHKEKNRPNNNLFAIIQGGTHLKMRSLSVELTHKGFDGYAIGGLAVGESVDEMLETIAHTAPLLPKDKPRYLMGVGTPENILDAISLGVDMFDCVMPTRNARNATLFTHSGKISIKNAPYKLDNTPIEENCACYACKRYSKAYLHHLFRAKELTYARLASLHNLHFYLEMVKNARNAILEKRFLSFKKEFLEKYHSCSH.

The active-site Proton acceptor is aspartate 90. Substrate contacts are provided by residues aspartate 90–phenylalanine 94, aspartate 144, glutamine 189, and glycine 215. Residues glycine 246 to asparagine 252 form an RNA binding region. Aspartate 265 functions as the Nucleophile in the catalytic mechanism. An RNA binding; important for wobble base 34 recognition region spans residues threonine 270–arginine 274. 4 residues coordinate Zn(2+): cysteine 303, cysteine 305, cysteine 308, and histidine 334.

This sequence belongs to the queuine tRNA-ribosyltransferase family. In terms of assembly, homodimer. Within each dimer, one monomer is responsible for RNA recognition and catalysis, while the other monomer binds to the replacement base PreQ1. Zn(2+) serves as cofactor.

It catalyses the reaction 7-aminomethyl-7-carbaguanine + guanosine(34) in tRNA = 7-aminomethyl-7-carbaguanosine(34) in tRNA + guanine. It functions in the pathway tRNA modification; tRNA-queuosine biosynthesis. Its function is as follows. Catalyzes the base-exchange of a guanine (G) residue with the queuine precursor 7-aminomethyl-7-deazaguanine (PreQ1) at position 34 (anticodon wobble position) in tRNAs with GU(N) anticodons (tRNA-Asp, -Asn, -His and -Tyr). Catalysis occurs through a double-displacement mechanism. The nucleophile active site attacks the C1' of nucleotide 34 to detach the guanine base from the RNA, forming a covalent enzyme-RNA intermediate. The proton acceptor active site deprotonates the incoming PreQ1, allowing a nucleophilic attack on the C1' of the ribose to form the product. After dissociation, two additional enzymatic reactions on the tRNA convert PreQ1 to queuine (Q), resulting in the hypermodified nucleoside queuosine (7-(((4,5-cis-dihydroxy-2-cyclopenten-1-yl)amino)methyl)-7-deazaguanosine). The protein is Queuine tRNA-ribosyltransferase of Helicobacter pylori (strain G27).